The following is a 214-amino-acid chain: External core antigen (214 aa).

The signal sequence occupies residues 1–19 (MQLFHLCLIISCTCPTLQA). Residues 25-27 (GWL) form an HBEAG region. A disordered region spans residues 164–214 (PNAPILSTLPETTVVRRRDRGRSPRRRTPSPRRRRSQSPRRRRSQSRESQC). Residues 178–207 (VRRRDRGRSPRRRTPSPRRRRSQSPRRRRS) are compositionally biased toward basic residues. The 1; half-length repeat unit spans residues 186–192 (SPRRRTP). The tract at residues 186–208 (SPRRRTPSPRRRRSQSPRRRRSQ) is 3 X 8 AA repeats of S-P-R-R-R-R-S-Q. The propeptide occupies 186-214 (SPRRRTPSPRRRRSQSPRRRRSQSRESQC). Tandem repeats lie at residues 193–200 (SPRRRRSQ) and 201–208 (SPRRRRSQ).

The protein belongs to the orthohepadnavirus precore antigen family. As to quaternary structure, homodimerizes. In terms of processing, phosphorylated. Cleaved by host furin.

The protein localises to the secreted. It is found in the host nucleus. Its function is as follows. May regulate immune response to the intracellular capsid in acting as a T-cell tolerogen, by having an immunoregulatory effect which prevents destruction of infected cells by cytotoxic T-cells. This immune regulation may predispose to chronicity during perinatal infections and prevent severe liver injury during adult infections. The sequence is that of External core antigen from Homo sapiens (Human).